Here is a 1081-residue protein sequence, read N- to C-terminus: Inversin (1081 aa).

ANK repeat units lie at residues 13-42 (SLAS…ALKD), 47-76 (FGRT…DVNK), 80-110 (SQRT…WMQK), 113-144 (EEMT…EVDT), 148-177 (NKQT…NIGI), 181-213 (EGKI…TESL), 220-250 (EGRT…NITS), 254-283 (LFRT…SGTI), 288-317 (QGAT…VKDD), 321-350 (EGRT…DIDI), 356-385 (YGGT…QVDA), 389-418 (MKHT…RVDL), 422-451 (DGHS…NPNV), 455-484 (AGRT…DPNI), 488-517 (EGRT…FPNQ), and 523-553 (ERYT…SIAA). Asparagine 75 bears the 3-hydroxyasparagine mark. Positions 490–498 (RTALHWSCN) match the D-box 1 motif. The IQ 1 domain occupies 555 to 584 (QDIAAFKIQAVYKGYKVRKAFRDRKNLLMK). Basic and acidic residues predominate over residues 589-610 (RKDAAAKKREEENKRREAEQQK). Residues 589 to 889 (RKDAAAKKRE…PAPGPLSGQS (301 aa)) form a disordered region. A compositionally biased stretch (polar residues) spans 638-649 (RAPSKQPPSSEA). Basic and acidic residues-rich tracts occupy residues 688 to 698 (KPNESPREQCK), 724 to 740 (EKSR…DKGK), and 772 to 785 (DGHR…DTAS). Positions 863–872 (SGTSTLSEDA) are enriched in polar residues. The short motif at 910-918 (RKELFRKKN) is the D-box 2 element. Residues 917–946 (KNKAAAVIQRAWRSYQLRKHLSHLLHMKEL) form the IQ 2 domain. The ANK 17 repeat unit spans residues 1022–1050 (RTHSVLHLNSVSNLQCIHLLENSGRSKNF). The segment covering 1051–1061 (SYNLQSATPPK) has biased composition (polar residues). The interval 1051-1081 (SYNLQSATPPKTKTKLRPSLEEECVRGSWNS) is disordered.

As to quaternary structure, binds calmodulin via its IQ domains. Interacts with APC2. Interacts with alpha-, beta-, and gamma-catenin. Interacts with N-cadherin (CDH2). Interacts with NPHP1. Interacts with DVL1, PRICKLE (PRICKLE1 or PRICKLE2) and Strabismus (VANGL1 or VANGL2). Component of a complex containing at least ANKS6, INVS, NEK8 and NPHP3. ANKS6 may organize complex assembly by linking INVS and NPHP3 to NEK8 and INVS may target the complex to the proximal ciliary axoneme. Interacts with IQCB1; the interaction likely requires additional interactors. Interacts with microtubules. In terms of processing, may be ubiquitinated via its interaction with APC2. Hydroxylated at Asn-75, most probably by HIF1AN.

The protein resides in the cytoplasm. The protein localises to the cytoskeleton. It is found in the membrane. It localises to the spindle. Its subcellular location is the nucleus. In terms of biological role, required for normal renal development and establishment of left-right axis. Probably acts as a molecular switch between different Wnt signaling pathways. Inhibits the canonical Wnt pathway by targeting cytoplasmic disheveled (DVL1) for degradation by the ubiquitin-proteasome. This suggests that it is required in renal development to oppose the repression of terminal differentiation of tubular epithelial cells by Wnt signaling. Involved in the organization of apical junctions in kidney cells together with NPHP1, NPHP4 and RPGRIP1L/NPHP8. Does not seem to be strictly required for ciliogenesis. The sequence is that of Inversin (INVS) from Canis lupus familiaris (Dog).